A 253-amino-acid chain; its full sequence is Triosephosphate isomerase (253 aa).

9–11 contributes to the substrate binding site; that stretch reads NWK. Histidine 96 functions as the Electrophile in the catalytic mechanism. Residue glutamate 169 is the Proton acceptor of the active site. Residues glycine 175, serine 215, and 236 to 237 each bind substrate; that span reads GG.

This sequence belongs to the triosephosphate isomerase family. Homodimer.

It is found in the cytoplasm. It catalyses the reaction D-glyceraldehyde 3-phosphate = dihydroxyacetone phosphate. The protein operates within carbohydrate biosynthesis; gluconeogenesis. Its pathway is carbohydrate degradation; glycolysis; D-glyceraldehyde 3-phosphate from glycerone phosphate: step 1/1. Its function is as follows. Involved in the gluconeogenesis. Catalyzes stereospecifically the conversion of dihydroxyacetone phosphate (DHAP) to D-glyceraldehyde-3-phosphate (G3P). This is Triosephosphate isomerase from Borrelia garinii subsp. bavariensis (strain ATCC BAA-2496 / DSM 23469 / PBi) (Borreliella bavariensis).